Consider the following 234-residue polypeptide: Glucosamine-6-phosphate deaminase (234 aa).

Aspartate 63 acts as the Proton acceptor; for enolization step in catalysis. Catalysis depends on asparagine 129, which acts as the For ring-opening step. The active-site Proton acceptor; for ring-opening step is histidine 131. Glutamate 136 serves as the catalytic For ring-opening step.

This sequence belongs to the glucosamine/galactosamine-6-phosphate isomerase family. NagB subfamily.

The catalysed reaction is alpha-D-glucosamine 6-phosphate + H2O = beta-D-fructose 6-phosphate + NH4(+). The protein operates within amino-sugar metabolism; N-acetylneuraminate degradation; D-fructose 6-phosphate from N-acetylneuraminate: step 5/5. Its function is as follows. Catalyzes the reversible isomerization-deamination of glucosamine 6-phosphate (GlcN6P) to form fructose 6-phosphate (Fru6P) and ammonium ion. The protein is Glucosamine-6-phosphate deaminase of Listeria monocytogenes serotype 4a (strain HCC23).